The chain runs to 315 residues: Probable cytosolic iron-sulfur protein assembly protein CIAO1 homolog (315 aa).

7 WD repeats span residues Gly11–Lys50, Gly56–Cys95, Gly100–Cys139, Cys145–Asp188, Lys189–Glu229, Arg236–Arg275, and Ala283–Asp315.

The protein belongs to the WD repeat CIA1 family.

Essential component of the cytosolic iron-sulfur (Fe/S) protein assembly machinery. Required for the maturation of extramitochondrial Fe/S proteins. The polypeptide is Probable cytosolic iron-sulfur protein assembly protein CIAO1 homolog (Ixodes scapularis (Black-legged tick)).